The chain runs to 740 residues: Elongation factor 2 (740 aa).

The tr-type G domain maps to 23–264; sequence AQIRNAGTLA…MIIEHVPPPN (242 aa). GTP-binding positions include 32 to 39, 98 to 102, and 152 to 155; these read AHVDHGKT, DTPGH, and NKID. H605 is subject to Diphthamide.

Belongs to the TRAFAC class translation factor GTPase superfamily. Classic translation factor GTPase family. EF-G/EF-2 subfamily.

The protein localises to the cytoplasm. Functionally, catalyzes the GTP-dependent ribosomal translocation step during translation elongation. During this step, the ribosome changes from the pre-translocational (PRE) to the post-translocational (POST) state as the newly formed A-site-bound peptidyl-tRNA and P-site-bound deacylated tRNA move to the P and E sites, respectively. Catalyzes the coordinated movement of the two tRNA molecules, the mRNA and conformational changes in the ribosome. This Pyrobaculum calidifontis (strain DSM 21063 / JCM 11548 / VA1) protein is Elongation factor 2.